The following is a 585-amino-acid chain: Methicillin resistance mecR1 protein (585 aa).

The tract at residues 351–585 (LNQLAPYFKG…ERILKEMELI (235 aa)) is beta-lactamase-like.

It belongs to the peptidase M56 family.

In terms of biological role, penicillin-interactive protein and potential antirepressor. The protein is Methicillin resistance mecR1 protein (mecR1) of Staphylococcus aureus (strain Mu50 / ATCC 700699).